Reading from the N-terminus, the 158-residue chain is MEMQKEYPMTQEGFDKLEVELEHLKTVRRPEVVEKIKVARSFGDLSENSEYDAAKDEQGFVEQEITKIEMMLRHAVIIEDDGSKSEVQIGRTVTFAEVPGNEEESYKIVGSAEADPFEGKISNESPIAKALLGKKVGDEVNVPLPNGNEMRVKIVEIS.

The protein belongs to the GreA/GreB family.

In terms of biological role, necessary for efficient RNA polymerase transcription elongation past template-encoded arresting sites. The arresting sites in DNA have the property of trapping a certain fraction of elongating RNA polymerases that pass through, resulting in locked ternary complexes. Cleavage of the nascent transcript by cleavage factors such as GreA or GreB allows the resumption of elongation from the new 3'terminus. GreA releases sequences of 2 to 3 nucleotides. The sequence is that of Transcription elongation factor GreA from Macrococcus caseolyticus (strain JCSC5402) (Macrococcoides caseolyticum).